The chain runs to 437 residues: Probable exopolygalacturonase C (437 aa).

The signal sequence occupies residues 1–21 (MLITKTAFLAFLLSSVPLAHG). 5 N-linked (GlcNAc...) asparagine glycosylation sites follow: N25, N42, N82, N99, and N149. PbH1 repeat units lie at residues 215–236 (GTNIRISDSIMYNGDDAIAVGS) and 238–259 (SHNIVFERNTIGYQSHGMSIGS). D229 (proton donor) is an active-site residue. H253 is an active-site residue. N-linked (GlcNAc...) asparagine glycosylation occurs at N269. 2 PbH1 repeats span residues 270 to 291 (ITNLRFEDVTVIDALYAARFKS) and 299 to 320 (VKNVTWKNIRVYNVTFPIFVTQ). N-linked (GlcNAc...) asparagine glycans are attached at residues N301 and N311. The cysteines at positions 386 and 392 are disulfide-linked. 2 N-linked (GlcNAc...) asparagine glycosylation sites follow: N428 and N431.

It belongs to the glycosyl hydrolase 28 family.

The protein resides in the secreted. It catalyses the reaction [(1-&gt;4)-alpha-D-galacturonosyl](n) + H2O = alpha-D-galacturonate + [(1-&gt;4)-alpha-D-galacturonosyl](n-1). Specific in hydrolyzing the terminal glycosidic bond of polygalacturonic acid and oligogalacturonates. This chain is Probable exopolygalacturonase C (pgxC), found in Aspergillus flavus (strain ATCC 200026 / FGSC A1120 / IAM 13836 / NRRL 3357 / JCM 12722 / SRRC 167).